The following is a 784-amino-acid chain: Toll-like receptor 2 (784 aa).

The first 24 residues, 1 to 24 (MLRALWLFWILVAITVLFSKRCSA), serve as a signal peptide directing secretion. At 25 to 587 (QESLSCDASG…ARPSVLECHQ (563 aa)) the chain is on the extracellular side. A disulfide bridge connects residues C30 and C36. LRR repeat units lie at residues 54–77 (MKSL…ACAN), 78–101 (LQVL…SLGS), 102–125 (LEHL…PLSS), 126–150 (LKYL…NLTN), 151–175 (LQTL…GLTS), 176–199 (LNEL…SIRD), 200–223 (IHHL…ILSS), 224–250 (VRYL…VSSP), 251–278 (MKKL…YILE), 279–308 (LSEV…ELGK), 309–337 (VETV…LLEK), 338–361 (VKRI…HLKS), 362–388 (LEFL…AWPS), 389–414 (LQTL…TLKN), 415–437 (LTSL…WPEK), 438–457 (MRFL…CIPQ), 458–478 (TLEV…FLPR), 479–500 (LQEL…LFPV), and 501–524 (LLVM…SFPK). Residue N147 is glycosylated (N-linked (GlcNAc...) asparagine). C353 and C382 are oxidised to a cystine. A glycan (N-linked (GlcNAc...) asparagine) is linked at N414. Residues C432 and C454 are joined by a disulfide bond. N-linked (GlcNAc...) asparagine glycosylation is present at N442. Positions 525–576 (LETLEAGDNHFVCSCELLSFTMETPALAQILVDWPDSYLCDSPPRLHGHRLQ) constitute an LRRCT domain. A helical membrane pass occupies residues 588–608 (AALVSGVCCALLLLILLVGAL). At 609–784 (CHHFHGLWYL…WVNLRTAIKS (176 aa)) the chain is on the cytoplasmic side. Positions 639-782 (VCYDAFVSYS…VFWVNLRTAI (144 aa)) constitute a TIR domain. Residue K754 forms a Glycyl lysine isopeptide (Lys-Gly) (interchain with G-Cter in ubiquitin) linkage. Positions 761 to 778 (YLEWPLDEGQQEVFWVNL) match the ATG16L1-binding motif motif.

This sequence belongs to the Toll-like receptor family. In terms of assembly, interacts with LY96, TLR1 and TLR6 (via extracellular domain). TLR2 seems to exist in heterodimers with either TLR1 or TLR6 before stimulation by the ligand. The heterodimers form bigger oligomers in response to their corresponding ligands as well as further heterotypic associations with other receptors such as CD14 and/or CD36. Binds MYD88 (via TIR domain). Interacts with TICAM1. Interacts with CNPY3. Interacts with ATG16L1. Interacts with non-modified M.tuberculosis protein MPT83. Interacts with PPP1R11. Interacts with TIRAP. (Microbial infection) Interacts with Staphylococcus aureus protein SSL3; this interaction inhibits TLR2-mediated cytokine production. As to quaternary structure, (Microbial infection) Interacts with Toxoplasma gondii micronemal protein 1 (MIC1); the interaction promotes activation of bone marrow-derived dendritic cells and macrophages. Interacts with Toxoplasma gondii micronemal protein 4 (MIC4); the interaction promotes activation of bone marrow-derived dendritic cells and macrophages. In terms of processing, ubiquitinated at Lys-754 by PPP1R11, leading to its degradation. Deubiquitinated by USP2. Post-translationally, glycosylation of Asn-442 is critical for secretion of the N-terminal ectodomain of TLR2. As to expression, detected in a macrophage cell line, smooth muscle, lung, spleen, thymus, brain and adipose tissue. Cell surface expression detected in lung alveolar macrophages, dendritic macrophages and at lower levels in lung macrophages (at protein level).

The protein localises to the cell membrane. Its subcellular location is the cytoplasmic vesicle. It localises to the phagosome membrane. It is found in the membrane raft. Functionally, cooperates with LY96 to mediate the innate immune response to bacterial lipoproteins and other microbial cell wall components. Cooperates with TLR1 or TLR6 to mediate the innate immune response to bacterial lipoproteins or lipopeptides. Acts via MYD88 and TRAF6, leading to NF-kappa-B activation, cytokine secretion and the inflammatory response. May also promote apoptosis in response to lipoproteins. Forms activation clusters composed of several receptors depending on the ligand, these clusters trigger signaling from the cell surface and subsequently are targeted to the Golgi in a lipid-raft dependent pathway. Forms the cluster TLR2:TLR6:CD14:CD36 in response to diacylated lipopeptides and TLR2:TLR1:CD14 in response to triacylated lipopeptides. Recognizes M.tuberculosis major T-antigen EsxA (ESAT-6) which inhibits downstream MYD88-dependent signaling. Acts as the major receptor for M.tuberculosis lipoproteins LprA, LprG, LpqH and PhoS1 (pstS1), in conjunction with TLR1 and for some but not all lipoproteins CD14 and/or CD36. The lipoproteins act as agonists to modulate antigen presenting cell functions in response to the pathogen. Recombinant MPT83 from M.tuberculosis stimulates secretion of cytokines (TNF-alpha, IL-6 and IL-12p40) by mouse macrophage cell lines in a TLR2-dependent fashion, which leads to increased host innate immunity responses against the bacterium. Lung macrophages which express low levels of TLR2 respond poorly to stimulation by M.tuberculosis LpqH. Required for normal uptake of M.tuberculosis, a process that is inhibited by M.tuberculosis LppM. Interacts with TICAM2. (Microbial infection) Mediates activation of bone marrow-derived dendritic cells and macrophages, and production of pro-inflammatory cytokines, such as IL12 (IL12B/IL12A), triggered by Toxoplasma gondii micronemal protein 4 (MIC4) and micronemal protein 1 (MIC1). The sequence is that of Toll-like receptor 2 (Tlr2) from Mus musculus (Mouse).